Reading from the N-terminus, the 180-residue chain is MSDKPLPSSFDSDPEFFEENPWVKLRRRLREEPLIPLGCAATSYALWRAYKSMKAGDSDQLNRMFRYRIYAQAFTLVAVVVGGIYYKSERAQRKELERAMEEKKSQAKRDAWLRELEIRDQEDRDWRERHAAVERAAKEAGMKPKDVSKGLAGESAGNQEGEAKSNVGVLDAVKNLVKEK.

The HIG1 domain maps to 6–97; that stretch reads LPSSFDSDPE…SERAQRKELE (92 aa). Transmembrane regions (helical) follow at residues 34-50 and 69-86; these read LIPL…WRAY and IYAQ…GIYY. Positions 84 to 111 form a coiled coil; that stretch reads IYYKSERAQRKELERAMEEKKSQAKRDA. A compositionally biased stretch (basic and acidic residues) spans 135–148; the sequence is RAAKEAGMKPKDVS. Positions 135–165 are disordered; it reads RAAKEAGMKPKDVSKGLAGESAGNQEGEAKS.

Belongs to the RCF1 family. In terms of assembly, associates with the respiratory chain complex III/complex IV supercomplex.

Its subcellular location is the mitochondrion membrane. Cytochrome c oxidase subunit which plays a role in assembly of respiratory supercomplexes. In Coccidioides posadasii (strain C735) (Valley fever fungus), this protein is Respiratory supercomplex factor 1, mitochondrial (RCF1).